A 271-amino-acid polypeptide reads, in one-letter code: Large ribosomal subunit protein uL2cz/uL2cy (271 aa).

Disordered regions lie at residues 1-22 (MAKH…DRQV) and 223-271 (PVDH…RRRK).

It belongs to the universal ribosomal protein uL2 family. As to quaternary structure, part of the 50S ribosomal subunit.

Its subcellular location is the plastid. It localises to the chloroplast. The protein is Large ribosomal subunit protein uL2cz/uL2cy (rpl2-A) of Sorghum bicolor (Sorghum).